Consider the following 154-residue polypeptide: Myoglobin (154 aa).

The region spanning glycine 2–lysine 148 is the Globin domain. A Phosphoserine modification is found at serine 4. A nitrite-binding site is contributed by histidine 65. Histidine 65 provides a ligand contact to O2. Phosphothreonine is present on threonine 68. Histidine 94 contributes to the heme b binding site.

Belongs to the globin family. In terms of assembly, monomeric.

The protein resides in the cytoplasm. The protein localises to the sarcoplasm. The catalysed reaction is Fe(III)-heme b-[protein] + nitric oxide + H2O = Fe(II)-heme b-[protein] + nitrite + 2 H(+). It carries out the reaction H2O2 + AH2 = A + 2 H2O. Its function is as follows. Monomeric heme protein which primary function is to store oxygen and facilitate its diffusion within muscle tissues. Reversibly binds oxygen through a pentacoordinated heme iron and enables its timely and efficient release as needed during periods of heightened demand. Depending on the oxidative conditions of tissues and cells, and in addition to its ability to bind oxygen, it also has a nitrite reductase activity whereby it regulates the production of bioactive nitric oxide. Under stress conditions, like hypoxia and anoxia, it also protects cells against reactive oxygen species thanks to its pseudoperoxidase activity. This chain is Myoglobin (MB), found in Orycteropus afer (Aardvark).